The following is a 146-amino-acid chain: Vascular endothelial growth factor isoform GtVF (146 aa).

The first 24 residues, 1–24 (MAAYLLAVAILFCIQGWPSGTVQG), serve as a signal peptide directing secretion. Glutamine 25 carries the post-translational modification Pyrrolidone carboxylic acid. 3 disulfides stabilise this stretch: cysteine 38-cysteine 80, cysteine 69-cysteine 115, and cysteine 73-cysteine 117. Positions 116–146 (ECRPRSRSGVDSGKRKRNPEEGEPRAKFPFV) are disordered. Residues 133 to 146 (NPEEGEPRAKFPFV) show a composition bias toward basic and acidic residues.

Belongs to the PDGF/VEGF growth factor family. Snake venom VEGF subfamily. In terms of assembly, homodimer; disulfide-linked. Expressed by the venom gland.

Its subcellular location is the secreted. Functionally, snake venom VEGFs that may contribute to venom dispersion and prey subjugation by inducing vascular permeability and hypotension. This protein induces an increase in capillary permeability after intradermal injection, in a VEGFR-2 (KDR) dependent manner. In addition, it provokes a drastic hypotensive effect after intravenous injection. The hypotension is mediated by nitric oxide (NO), which is produced by VEGF-activated endothelium NO synthase. Also induces angiogenesis in vitro. Unlike other crotalid VEGFs, this protein probably interacts with VEGF receptor-2 (KDR). The sequence is that of Vascular endothelial growth factor isoform GtVF from Gloydius tsushimaensis (Tsushima Island pitviper).